Consider the following 80-residue polypeptide: Raniseptin-5 (80 aa).

The first 22 residues, 1 to 22 (MAFLKKSLFLVLFLGIVSLSIC), serve as a signal peptide directing secretion. Residues 23-49 (EEEKREGEEEEKQEEENEELSEEELRE) constitute a propeptide that is removed on maturation.

The protein belongs to the frog skin active peptide (FSAP) family. Dermaseptin subfamily. In terms of tissue distribution, expressed by the skin glands.

The protein localises to the secreted. Has antibacterial activity. In Boana raniceps (Chaco tree frog), this protein is Raniseptin-5.